Here is a 379-residue protein sequence, read N- to C-terminus: Homoserine O-succinyltransferase (379 aa).

In terms of domain architecture, AB hydrolase-1 spans 51–360 (NAVLICHALS…DAPQGHDAFL (310 aa)). Catalysis depends on Ser-157, which acts as the Nucleophile. Arg-227 contacts substrate. Residues Asp-323 and His-356 contribute to the active site. Asp-357 lines the substrate pocket.

Belongs to the AB hydrolase superfamily. MetX family. In terms of assembly, homodimer.

It is found in the cytoplasm. The enzyme catalyses L-homoserine + succinyl-CoA = O-succinyl-L-homoserine + CoA. It functions in the pathway amino-acid biosynthesis; L-methionine biosynthesis via de novo pathway; O-succinyl-L-homoserine from L-homoserine: step 1/1. In terms of biological role, transfers a succinyl group from succinyl-CoA to L-homoserine, forming succinyl-L-homoserine. The polypeptide is Homoserine O-succinyltransferase (Pseudomonas fluorescens (strain Pf0-1)).